The sequence spans 285 residues: MGLFKKRKYITVSSKNLDENNDVENQPTIPDGMWIKCSKCGKILYKSDVDDNFKVCPKCNAHLRMNARERIEFIIDEGTFIEFDKNMMAANPLEFPNYEAKIKSMQEKTGLKDGVVTGLGNINGYKTVIAVMDSNFMMGSMGSVVGEKITRAIEEATERKLPVIIFTTSGGARMQEGMFSLMQMAKTSAALAKHNEAGLLYVSVLTDPTTGGVTASFAMLGDIILAEPKTLIGFAGRRVIEQTINQKLPSDFQTSEFLFKHGFIDMIVERKELKVTLGNILRMHS.

Positions 33–285 (MWIKCSKCGK…TLGNILRMHS (253 aa)) constitute a CoA carboxyltransferase N-terminal domain. Zn(2+) contacts are provided by cysteine 37, cysteine 40, cysteine 56, and cysteine 59. The segment at 37–59 (CSKCGKILYKSDVDDNFKVCPKC) adopts a C4-type zinc-finger fold.

It belongs to the AccD/PCCB family. As to quaternary structure, acetyl-CoA carboxylase is a heterohexamer composed of biotin carboxyl carrier protein (AccB), biotin carboxylase (AccC) and two subunits each of ACCase subunit alpha (AccA) and ACCase subunit beta (AccD). Zn(2+) is required as a cofactor.

The protein resides in the cytoplasm. The catalysed reaction is N(6)-carboxybiotinyl-L-lysyl-[protein] + acetyl-CoA = N(6)-biotinyl-L-lysyl-[protein] + malonyl-CoA. The protein operates within lipid metabolism; malonyl-CoA biosynthesis; malonyl-CoA from acetyl-CoA: step 1/1. Component of the acetyl coenzyme A carboxylase (ACC) complex. Biotin carboxylase (BC) catalyzes the carboxylation of biotin on its carrier protein (BCCP) and then the CO(2) group is transferred by the transcarboxylase to acetyl-CoA to form malonyl-CoA. The protein is Acetyl-coenzyme A carboxylase carboxyl transferase subunit beta of Clostridium acetobutylicum (strain ATCC 824 / DSM 792 / JCM 1419 / IAM 19013 / LMG 5710 / NBRC 13948 / NRRL B-527 / VKM B-1787 / 2291 / W).